The chain runs to 243 residues: Zinc import ATP-binding protein ZnuC (243 aa).

Residues 4–219 enclose the ABC transporter domain; it reads ITVENLSVRY…PEYRALFGTG (216 aa). An ATP-binding site is contributed by 36-43; sequence GPNGSGKT.

The protein belongs to the ABC transporter superfamily. Zinc importer (TC 3.A.1.15.5) family. As to quaternary structure, the complex is composed of two ATP-binding proteins (ZnuC), two transmembrane proteins (ZnuB) and a solute-binding protein (ZnuA).

The protein localises to the cell inner membrane. It carries out the reaction Zn(2+)(out) + ATP(in) + H2O(in) = Zn(2+)(in) + ADP(in) + phosphate(in) + H(+)(in). Part of the ABC transporter complex ZnuABC involved in zinc import. Responsible for energy coupling to the transport system. In Jannaschia sp. (strain CCS1), this protein is Zinc import ATP-binding protein ZnuC.